The sequence spans 296 residues: Putative S-adenosyl-L-methionine-dependent methyltransferase MAP_3881 (296 aa).

S-adenosyl-L-methionine is bound by residues aspartate 121 and 150–151; that span reads DL.

The protein belongs to the UPF0677 family.

Functionally, exhibits S-adenosyl-L-methionine-dependent methyltransferase activity. The polypeptide is Putative S-adenosyl-L-methionine-dependent methyltransferase MAP_3881 (Mycolicibacterium paratuberculosis (strain ATCC BAA-968 / K-10) (Mycobacterium paratuberculosis)).